The following is a 249-amino-acid chain: 2,3-bisphosphoglycerate-dependent phosphoglycerate mutase (249 aa).

Residues 9-16, 22-23, Arg-61, 88-91, Lys-99, 115-116, and 184-185 each bind substrate; these read RHGQSQWN, TG, ERHY, RR, and GN. The active-site Tele-phosphohistidine intermediate is His-10. The active-site Proton donor/acceptor is the Glu-88.

Belongs to the phosphoglycerate mutase family. BPG-dependent PGAM subfamily. As to quaternary structure, homodimer.

It catalyses the reaction (2R)-2-phosphoglycerate = (2R)-3-phosphoglycerate. It functions in the pathway carbohydrate degradation; glycolysis; pyruvate from D-glyceraldehyde 3-phosphate: step 3/5. Catalyzes the interconversion of 2-phosphoglycerate and 3-phosphoglycerate. This is 2,3-bisphosphoglycerate-dependent phosphoglycerate mutase from Xanthomonas oryzae pv. oryzae (strain MAFF 311018).